The chain runs to 346 residues: Putative toluene-4-sulfonate monooxygenase system iron-sulfur subunit TsaM2 (346 aa).

A Rieske domain is found at 7–108; it reads WYVAGMATDC…LVERHGLLWI (102 aa). Residues C47, H49, C66, and H69 each coordinate [2Fe-2S] cluster.

Homotetramer. Part of the p-toluenesulfonate methyl-monooxygenase complex TsaBM, comprising the reductase TsaB and the oxygenase TsaM. [2Fe-2S] cluster is required as a cofactor.

The enzyme catalyses toluene-4-sulfonate + NADH + O2 + H(+) = 4-(hydroxymethyl)benzenesulfonate + NAD(+) + H2O. Functionally, involved in the toluene-4-sulfonate degradation pathway. Does not discriminate between the sulfonate and the carboxyl substituents and can also be involved in the p-toluenecarboxylate degradation pathway. The polypeptide is Putative toluene-4-sulfonate monooxygenase system iron-sulfur subunit TsaM2 (tsaM2) (Comamonas testosteroni (Pseudomonas testosteroni)).